A 702-amino-acid polypeptide reads, in one-letter code: Elongation factor G (702 aa).

The region spanning 8–290 (ARYRNIGISA…AVIEYLPAPT (283 aa)) is the tr-type G domain. Residues 17–24 (AHIDAGKT), 88–92 (DTPGH), and 142–145 (NKMD) contribute to the GTP site.

Belongs to the TRAFAC class translation factor GTPase superfamily. Classic translation factor GTPase family. EF-G/EF-2 subfamily.

The protein localises to the cytoplasm. Functionally, catalyzes the GTP-dependent ribosomal translocation step during translation elongation. During this step, the ribosome changes from the pre-translocational (PRE) to the post-translocational (POST) state as the newly formed A-site-bound peptidyl-tRNA and P-site-bound deacylated tRNA move to the P and E sites, respectively. Catalyzes the coordinated movement of the two tRNA molecules, the mRNA and conformational changes in the ribosome. This is Elongation factor G from Photorhabdus laumondii subsp. laumondii (strain DSM 15139 / CIP 105565 / TT01) (Photorhabdus luminescens subsp. laumondii).